A 247-amino-acid chain; its full sequence is 2,3-bisphosphoglycerate-dependent phosphoglycerate mutase (247 aa).

Substrate is bound by residues 8–15, 21–22, arginine 60, 87–90, lysine 98, 114–115, and 183–184; these read RHGESQWN, TG, ERHY, RR, and GN. Histidine 9 serves as the catalytic Tele-phosphohistidine intermediate. The Proton donor/acceptor role is filled by glutamate 87.

The protein belongs to the phosphoglycerate mutase family. BPG-dependent PGAM subfamily.

It catalyses the reaction (2R)-2-phosphoglycerate = (2R)-3-phosphoglycerate. Its pathway is carbohydrate degradation; glycolysis; pyruvate from D-glyceraldehyde 3-phosphate: step 3/5. Catalyzes the interconversion of 2-phosphoglycerate and 3-phosphoglycerate. This Chlorobium phaeobacteroides (strain DSM 266 / SMG 266 / 2430) protein is 2,3-bisphosphoglycerate-dependent phosphoglycerate mutase.